The primary structure comprises 534 residues: Lysophosphatidylcholine acyltransferase 1 (534 aa).

A disordered region spans residues 1-25 (MRLRGRGPRAAPSSSSGAGDARRLA). Residues 1-57 (MRLRGRGPRAAPSSSSGAGDARRLAPPGRNPFVHELRLSALQKAQVAFMTLTLFPIR) lie on the Cytoplasmic side of the membrane. The span at 8–19 (PRAAPSSSSGAG) shows a compositional bias: low complexity. The helical; Signal-anchor for type II membrane protein transmembrane segment at 58–78 (LLFAAFMMLLAWPFALLASLG) threads the bilayer. Residues 79–534 (PPDKEPEQPL…GRKNSCKKAD (456 aa)) are Lumenal-facing. Residues 135-140 (HSSYFD) carry the HXXXXD motif motif. 2 consecutive EF-hand domains span residues 379 to 414 (PVSDALEDMFSLFDESGGGEIDLREYVVALSVVCRP) and 451 to 486 (VSELTVTDLFQAIDQEDKGRITFDDFCGFAEMYPDY). Residues Asp-392, Ser-394, Glu-398, and Glu-403 each contribute to the Ca(2+) site. Residues 531–534 (KKAD) carry the Di-lysine motif motif.

The protein belongs to the 1-acyl-sn-glycerol-3-phosphate acyltransferase family. Predominantly expressed in lung where it is enriched in alveolar type II cells. Expressed at lower levels in spleen and brain. Also detected in erythroleukemic cells and reticulocytes. Weakly or not expressed in other tissues.

It localises to the endoplasmic reticulum membrane. The protein resides in the golgi apparatus membrane. Its subcellular location is the cell membrane. It is found in the lipid droplet. It carries out the reaction a 1-acyl-sn-glycero-3-phosphocholine + an acyl-CoA = a 1,2-diacyl-sn-glycero-3-phosphocholine + CoA. It catalyses the reaction a 1-O-alkyl-sn-glycero-3-phosphocholine + acetyl-CoA = a 1-O-alkyl-2-acetyl-sn-glycero-3-phosphocholine + CoA. The catalysed reaction is a 1-acyl-sn-glycero-3-phosphate + an acyl-CoA = a 1,2-diacyl-sn-glycero-3-phosphate + CoA. The enzyme catalyses a 1-O-(1Z-alkenyl)-sn-glycero-3-phosphocholine + an acyl-CoA = a 1-O-(1Z-alkenyl)-2-acyl-sn-glycero-3-phosphocholine + CoA. It carries out the reaction 1-acyl-sn-glycero-3-phospho-(1'-sn-glycerol) + an acyl-CoA = a 1,2-diacyl-sn-glycero-3-phospho-(1'-sn-glycerol) + CoA. It catalyses the reaction 1-hexadecanoyl-sn-glycero-3-phosphocholine + hexadecanoyl-CoA = 1,2-dihexadecanoyl-sn-glycero-3-phosphocholine + CoA. The catalysed reaction is 1-O-hexadecyl-sn-glycero-3-phosphocholine + hexadecanoyl-CoA = 1-O-hexadecyl-2-hexadecanoyl-sn-glycero-3-phosphocholine + CoA. The enzyme catalyses a 1-O-(1Z-alkenyl)-sn-glycero-3-phosphocholine + hexadecanoyl-CoA = 1-O-(1Z)-alkenyl-2-hexadecanoyl-sn-glycero-3-phosphocholine + CoA. It carries out the reaction 1-hexadecanoyl-sn-glycero-3-phospho-(1'-sn-glycerol) + hexadecanoyl-CoA = 1,2-dihexadecanoyl-sn-glycero-3-phospho-(1'-sn-glycerol) + CoA. It catalyses the reaction 1-dodecanoyl-sn-glycero-3-phosphocholine + hexadecanoyl-CoA = 1-dodecanoyl-2-hexadecanoyl-sn-glycero-3-phosphocholine + CoA. The catalysed reaction is 1-tetradecanoyl-sn-glycero-3-phosphocholine + hexadecanoyl-CoA = 1-tetradecanoyl-2-hexadecanoyl-sn-glycero-3-phosphocholine + CoA. The enzyme catalyses 1-O-octadecyl-sn-glycero-3-phosphocholine + hexadecanoyl-CoA = 1-O-octadecyl-2-hexadecanoyl-sn-glycero-3-phosphocholine + CoA. It carries out the reaction 1-octadecanoyl-sn-glycero-3-phosphocholine + hexadecanoyl-CoA = 1-octadecanoyl-2-hexadecanoyl-sn-glycero-3-phosphocholine + CoA. It catalyses the reaction 1-(9Z-octadecenoyl)-sn-glycero-3-phosphocholine + hexadecanoyl-CoA = 1-(9Z-octadecenoyl)-2-hexadecanoyl-sn-glycero-3-phosphocholine + CoA. The catalysed reaction is 1-eicosanoyl-sn-glycero-3-phosphocholine + hexadecanoyl-CoA = 1-eicosanoyl-2-hexadecanoyl-sn-glycero-3-phosphocholine + CoA. The enzyme catalyses hexanoyl-CoA + 1-hexadecanoyl-sn-glycero-3-phosphocholine = 1-hexadecanoyl-2-hexanoyl-sn-glycero-3-phosphocholine + CoA. It carries out the reaction octanoyl-CoA + 1-hexadecanoyl-sn-glycero-3-phosphocholine = 1-hexadecanoyl-2-octanoyl-sn-glycero-3-phosphocholine + CoA. It catalyses the reaction decanoyl-CoA + 1-hexadecanoyl-sn-glycero-3-phosphocholine = 1-hexadecanoyl-2-decanoyl-sn-glycero-3-phosphocholine + CoA. The catalysed reaction is dodecanoyl-CoA + 1-hexadecanoyl-sn-glycero-3-phosphocholine = 1-hexadecanoyl-2-dodecanoyl-sn-glycero-3-phosphocholine + CoA. The enzyme catalyses tetradecanoyl-CoA + 1-hexadecanoyl-sn-glycero-3-phosphocholine = 1-hexadecanoyl-2-tetradecanoyl-sn-glycero-3-phosphocholine + CoA. It carries out the reaction 1-hexadecanoyl-sn-glycero-3-phosphocholine + (9Z)-octadecenoyl-CoA = 1-hexadecanoyl-2-(9Z-octadecenoyl)-sn-glycero-3-phosphocholine + CoA. It catalyses the reaction (9Z,12Z)-octadecadienoyl-CoA + 1-hexadecanoyl-sn-glycero-3-phosphocholine = 1-hexadecanoyl-2-(9Z,12Z-octadecadienoyl)-sn-glycero-3-phosphocholine + CoA. The catalysed reaction is (4Z,7Z,10Z,13Z,16Z,19Z)-docosahexaenoyl-CoA + 1-hexadecanoyl-sn-glycero-3-phosphocholine = 1-hexadecanoyl-2-(4Z,7Z,10Z,13Z,16Z,19Z-docosahexaenoyl)-sn-glycero-3-phosphocholine + CoA. The enzyme catalyses 1-hexadecanoyl-sn-glycero-3-phosphocholine + acetyl-CoA = 1-hexadecanoyl-2-acetyl-sn-glycero-3-phosphocholine + CoA. It carries out the reaction eicosanoyl-CoA + 1-hexadecanoyl-sn-glycero-3-phosphocholine = 1-hexadecanoyl-2-eicosanoyl-sn-glycero-3-phosphocholine + CoA. It catalyses the reaction 1-O-hexadecyl-sn-glycero-3-phosphocholine + acetyl-CoA = 1-O-hexadecyl-2-acetyl-sn-glycero-3-phosphocholine + CoA. The catalysed reaction is a 1-acyl-sn-glycero-3-phosphocholine + hexadecanoyl-CoA = 1-acyl-2-hexadecanoyl-sn-glycero-3-phosphocholine + CoA. The enzyme catalyses a 1-acyl-sn-glycero-3-phosphate + hexadecanoyl-CoA = 1-acyl-2-hexadecanoyl-sn-glycero-3-phosphate + CoA. It carries out the reaction 1-acyl-sn-glycero-3-phospho-(1'-sn-glycerol) + hexadecanoyl-CoA = 1-acyl-2-hexadecanoyl-sn-glycero-3-phospho-(1'-sn-glycerol) + CoA. The protein operates within lipid metabolism; phospholipid metabolism. Not activated by inflammatory stimulation. Inhibited by Cu(2+), Fe(2+), Ca(2+) and Mg(2+). Activity is not affected by Co(2+) or Mn(2+). Its function is as follows. Exhibits both acyltransferase and acetyltransferase activities. Activity is calcium-independent. Catalyzes the conversion of lysophosphatidylcholine (1-acyl-sn-glycero-3-phosphocholine or LPC) into phosphatidylcholine (1,2-diacyl-sn-glycero-3-phosphocholine or PC). Catalyzes the conversion 1-acyl-sn-glycerol-3-phosphate (lysophosphatidic acid or LPA) into 1,2-diacyl-sn-glycerol-3-phosphate (phosphatidic acid or PA) by incorporating an acyl moiety at the sn-2 position of the glycerol backbone. Displays a clear preference for saturated fatty acyl-CoAs, and 1-myristoyl or 1-palmitoyl LPC as acyl donors and acceptors, respectively. Involved in platelet-activating factor (PAF) biosynthesis by catalyzing the conversion of the PAF precursor, 1-O-alkyl-sn-glycero-3-phosphocholine (lyso-PAF) into 1-O-alkyl-2-acetyl-sn-glycero-3-phosphocholine (PAF). May synthesize phosphatidylcholine in pulmonary surfactant, thereby playing a pivotal role in respiratory physiology. Involved in the regulation of lipid droplet number and size. In Mus musculus (Mouse), this protein is Lysophosphatidylcholine acyltransferase 1 (Lpcat1).